The following is a 162-amino-acid chain: Putative 4-hydroxy-4-methyl-2-oxoglutarate aldolase (162 aa).

Substrate-binding positions include 75 to 78 (GDML) and arginine 97. Aspartate 98 is a binding site for a divalent metal cation.

Belongs to the class II aldolase/RraA-like family. Homotrimer. Requires a divalent metal cation as cofactor.

The enzyme catalyses 4-hydroxy-4-methyl-2-oxoglutarate = 2 pyruvate. The catalysed reaction is oxaloacetate + H(+) = pyruvate + CO2. Its function is as follows. Catalyzes the aldol cleavage of 4-hydroxy-4-methyl-2-oxoglutarate (HMG) into 2 molecules of pyruvate. Also contains a secondary oxaloacetate (OAA) decarboxylase activity due to the common pyruvate enolate transition state formed following C-C bond cleavage in the retro-aldol and decarboxylation reactions. The chain is Putative 4-hydroxy-4-methyl-2-oxoglutarate aldolase from Stutzerimonas stutzeri (strain A1501) (Pseudomonas stutzeri).